Consider the following 379-residue polypeptide: Presenilin-associated rhomboid-like protein, mitochondrial (379 aa).

The N-terminal 52 residues, 1-52 (MAWRGWAQRGWGCGQAWGASVGGRSCEELTAVLTPPQLLGRRFNFFIQQKCG), are a transit peptide targeting the mitochondrion. Topologically, residues 53-101 (FRKAPRKVEPRRSDPGTSGEAYKRSALIPPVEETVFYPSPYPIRSLIKP) are mitochondrial matrix. Residue Ser-65 is modified to Phosphoserine. A Phosphothreonine modification is found at Thr-69. The residue at position 70 (Ser-70) is a Phosphoserine. A helical membrane pass occupies residues 102–121 (LFFTVGFTGCAFGSAAIWQY). Residues 122-167 (ESLKSRVQSYFDGIKADWLDSIRPQKEGDFRKEINKWWNNLSDGQR) are Mitochondrial intermembrane-facing. A helical transmembrane segment spans residues 168-187 (TVTGIIAANVLVFCLWRVPS). Residues 188–207 (LQRTMIRYFTSNPASKVLCS) are Mitochondrial matrix-facing. The helical transmembrane segment at 208–230 (PMLLSTFSHFSLFHMAANMYVLW) threads the bilayer. Residues 231 to 244 (SFSSSIVNILGQEQ) lie on the Mitochondrial intermembrane side of the membrane. The helical transmembrane segment at 245–262 (FMAVYLSAGVISNFVSYV) threads the bilayer. Over 263-272 (GKVATGRYGP) the chain is Mitochondrial matrix. The helical transmembrane segment at 273-289 (SLGASGAIMTVLAAVCT) threads the bilayer. The active-site Nucleophile is Ser-277. Over 290–295 (KIPEGR) the chain is Mitochondrial intermembrane. The chain crosses the membrane as a helical span at residues 296–318 (LAIIFLPMFTFTAGNALKAIIAM). Topologically, residues 319-332 (DTAGMILGWKFFDH) are mitochondrial matrix. A helical transmembrane segment spans residues 333 to 354 (AAHLGGALFGIWYVTYGHELIW). The active site involves His-335. The Mitochondrial intermembrane segment spans residues 355–379 (KNREPLVKIWHEIRTNGPKKGGGSK).

The protein belongs to the peptidase S54 family. In terms of assembly, interacts with PSEN1 and PSEN2. Binds OPA1. In terms of processing, P-beta is proteolytically processed (beta-cleavage) in a PARL-dependent manner. The cleavage is inhibited when residues Ser-65, Thr-69 and Ser-70 are all phosphorylated.

The protein localises to the mitochondrion inner membrane. Its subcellular location is the nucleus. It carries out the reaction Cleaves type-1 transmembrane domains using a catalytic dyad composed of serine and histidine that are contributed by different transmembrane domains.. In terms of biological role, required for the control of apoptosis during postnatal growth. Essential for proteolytic processing of an antiapoptotic form of OPA1 which prevents the release of mitochondrial cytochrome c in response to intrinsic apoptotic signals. Required for the maturation of PINK1 into its 52kDa mature form after its cleavage by mitochondrial-processing peptidase (MPP). Promotes cleavage of serine/threonine-protein phosphatase PGAM5 in damaged mitochondria in response to loss of mitochondrial membrane potential. Mediates differential cleavage of PINK1 and PGAM5 depending on the health status of mitochondria, disassociating from PINK1 and associating with PGAM5 in response to mitochondrial membrane potential loss. Required for processing of CLPB into a form with higher protein disaggregase activity by removing an autoinhibitory N-terminal peptide. Promotes processing of DIABLO/SMAC in the mitochondrion which is required for DIABLO apoptotic activity. Also required for cleavage of STARD7 and TTC19. Promotes changes in mitochondria morphology regulated by phosphorylation of P-beta domain. The protein is Presenilin-associated rhomboid-like protein, mitochondrial (PARL) of Homo sapiens (Human).